Here is a 448-residue protein sequence, read N- to C-terminus: Methylenetetrahydrofolate--tRNA-(uracil-5-)-methyltransferase TrmFO (448 aa).

FAD is bound at residue 13-18 (GAGLAG).

It belongs to the MnmG family. TrmFO subfamily. FAD is required as a cofactor.

It localises to the cytoplasm. The enzyme catalyses uridine(54) in tRNA + (6R)-5,10-methylene-5,6,7,8-tetrahydrofolate + NADH + H(+) = 5-methyluridine(54) in tRNA + (6S)-5,6,7,8-tetrahydrofolate + NAD(+). The catalysed reaction is uridine(54) in tRNA + (6R)-5,10-methylene-5,6,7,8-tetrahydrofolate + NADPH + H(+) = 5-methyluridine(54) in tRNA + (6S)-5,6,7,8-tetrahydrofolate + NADP(+). Its function is as follows. Catalyzes the folate-dependent formation of 5-methyl-uridine at position 54 (M-5-U54) in all tRNAs. In Streptococcus pyogenes serotype M5 (strain Manfredo), this protein is Methylenetetrahydrofolate--tRNA-(uracil-5-)-methyltransferase TrmFO.